Reading from the N-terminus, the 245-residue chain is uncharacterized protein (245 aa).

Residues 1–27 form the signal peptide; that stretch reads MKLKKRVSMFLVALTMCGGLFVTPAKA.

This is an uncharacterized protein from Bacillus subtilis (strain 168).